The following is a 617-amino-acid chain: Dihydroxy-acid dehydratase (617 aa).

D81 provides a ligand contact to Mg(2+). Position 122 (C122) interacts with [2Fe-2S] cluster. 2 residues coordinate Mg(2+): D123 and K124. An N6-carboxylysine modification is found at K124. C195 contacts [2Fe-2S] cluster. E491 provides a ligand contact to Mg(2+). Residue S517 is the Proton acceptor of the active site.

This sequence belongs to the IlvD/Edd family. Homodimer. It depends on [2Fe-2S] cluster as a cofactor. Mg(2+) is required as a cofactor.

It catalyses the reaction (2R)-2,3-dihydroxy-3-methylbutanoate = 3-methyl-2-oxobutanoate + H2O. The enzyme catalyses (2R,3R)-2,3-dihydroxy-3-methylpentanoate = (S)-3-methyl-2-oxopentanoate + H2O. It functions in the pathway amino-acid biosynthesis; L-isoleucine biosynthesis; L-isoleucine from 2-oxobutanoate: step 3/4. The protein operates within amino-acid biosynthesis; L-valine biosynthesis; L-valine from pyruvate: step 3/4. Its function is as follows. Functions in the biosynthesis of branched-chain amino acids. Catalyzes the dehydration of (2R,3R)-2,3-dihydroxy-3-methylpentanoate (2,3-dihydroxy-3-methylvalerate) into 2-oxo-3-methylpentanoate (2-oxo-3-methylvalerate) and of (2R)-2,3-dihydroxy-3-methylbutanoate (2,3-dihydroxyisovalerate) into 2-oxo-3-methylbutanoate (2-oxoisovalerate), the penultimate precursor to L-isoleucine and L-valine, respectively. This is Dihydroxy-acid dehydratase from Hydrogenovibrio crunogenus (strain DSM 25203 / XCL-2) (Thiomicrospira crunogena).